The chain runs to 246 residues: Mast cell protease-like protein (246 aa).

The N-terminal stretch at 1–18 is a signal peptide; sequence MQALLFLMALLLPSGAGA. Residues 19–20 constitute a propeptide, activation peptide; that stretch reads EE. The Peptidase S1 domain maps to 21 to 244; sequence IIGGVESEPH…HVPWINRVIK (224 aa). A disulfide bridge connects residues C50 and C66. Active-site charge relay system residues include H65 and D109. Disulfide bonds link C143-C208 and C174-C187. Catalysis depends on S202, which acts as the Charge relay system.

It belongs to the peptidase S1 family. Granzyme subfamily.

This Mus musculus (Mouse) protein is Mast cell protease-like protein (Mcptl).